Reading from the N-terminus, the 83-residue chain is Putative membrane protein insertion efficiency factor (83 aa).

The interval 63–83 (GGNDPVPDHFSLRRNKTDISD) is disordered. A compositionally biased stretch (basic and acidic residues) spans 68–83 (VPDHFSLRRNKTDISD).

This sequence belongs to the UPF0161 family.

Its subcellular location is the cell membrane. In terms of biological role, could be involved in insertion of integral membrane proteins into the membrane. This is Putative membrane protein insertion efficiency factor from Streptococcus agalactiae serotype III (strain NEM316).